We begin with the raw amino-acid sequence, 421 residues long: Forkhead box protein J1 (421 aa).

Disordered regions lie at residues 1–32 and 77–110; these read MAES…LDDS and ADPA…PPPD. Residues 11-21 show a composition bias toward gly residues; the sequence is AGPGEEAGPEG. Polar residues predominate over residues 90 to 99; it reads KPTSSCTSRS. The segment at residues 120–210 is a DNA-binding region (fork-head); it reads VKPPYSYATL…YAERLLSGAF (91 aa).

Belongs to the FOXJ1 family. Predominantly expressed in tissues containing motile cilia.

It localises to the nucleus. Its function is as follows. Transcription factor specifically required for the formation of motile cilia. Acts by activating transcription of genes that mediate assembly of motile cilia, such as CFAP157. Binds the DNA consensus sequences 5'-HWDTGTTTGTTTA-3' or 5'-KTTTGTTGTTKTW-3' (where H is not G, W is A or T, D is not C, and K is G or T). Activates the transcription of a variety of ciliary proteins in the developing brain and lung. This Mus musculus (Mouse) protein is Forkhead box protein J1.